A 187-amino-acid chain; its full sequence is Putative manganese efflux pump MntP (187 aa).

Transmembrane regions (helical) follow at residues 3–23 (YYTL…VSVG), 39–59 (IALC…YVGS), 65–85 (ISEF…INMI), 106–126 (LTML…SFAF), 129–149 (VNIW…SLFG), and 166–186 (LLGG…HRVF).

The protein belongs to the MntP (TC 9.B.29) family.

The protein resides in the cell inner membrane. Probably functions as a manganese efflux pump. The polypeptide is Putative manganese efflux pump MntP (Actinobacillus succinogenes (strain ATCC 55618 / DSM 22257 / CCUG 43843 / 130Z)).